The sequence spans 1061 residues: Bifunctional cytochrome P450/NADPH--P450 reductase 1 (1061 aa).

A cytochrome P450 region spans residues 1-475 (MKETSPIPQP…AEKAAPDEQK (475 aa)). Residue cysteine 403 participates in heme binding. Positions 476 to 1061 (EKTEAKGASV…MYAKDVWAGI (586 aa)) are NADPH--P450 reductase. A Flavodoxin-like domain is found at 493–632 (LLVLYGSDTG…QLDEWKKSMW (140 aa)). FMN-binding positions include 499 to 504 (SDTGTA), 546 to 549 (SYNG), 580 to 582 (CGD), and 588 to 590 (TYQ). Residues 671–904 (YEASHASIAE…RTPESRFQLP (234 aa)) enclose the FAD-binding FR-type domain.

In the N-terminal section; belongs to the cytochrome P450 family. The cofactor is FAD. FMN serves as cofactor. Heme b is required as a cofactor.

The protein resides in the cytoplasm. The enzyme catalyses an organic molecule + reduced [NADPH--hemoprotein reductase] + O2 = an alcohol + oxidized [NADPH--hemoprotein reductase] + H2O + H(+). It carries out the reaction 2 oxidized [cytochrome P450] + NADPH = 2 reduced [cytochrome P450] + NADP(+) + H(+). In terms of biological role, functions as a fatty acid monooxygenase. Catalyzes hydroxylation of a range of long-chain fatty acids, with a preference for long-chain unsaturated and branched-chain fatty acids over saturated fatty acids. Hydroxylation of myristic acid occurs mainly at the omega-2 position. Also displays a NADPH-dependent reductase activity in the C-terminal domain, which allows electron transfer from NADPH to the heme iron of the cytochrome P450 N-terminal domain. Is also able to catalyze efficient oxidation of sodium dodecyl sulfate (SDS). This is Bifunctional cytochrome P450/NADPH--P450 reductase 1 from Bacillus subtilis (strain 168).